The following is a 993-amino-acid chain: Vinculin (993 aa).

Tandem repeats lie at residues 258-364 (DSDN…TKEI) and 373-480 (TNTQ…ELVD). The segment at 258–480 (DSDNVTVMRK…LRNKLRELVD (223 aa)) is 2 X repeats. The disordered stretch occupies residues 730 to 797 (ITGAGGSRPP…PPPETDDEEE (68 aa)). Residues 758–768 (VHDRIYIREDI) are compositionally biased toward basic and acidic residues. Residues 769-790 (PTPPRPPPPVEISPPPRPPPPP) show a composition bias toward pro residues.

The protein belongs to the vinculin/alpha-catenin family. In terms of assembly, exhibits self-association properties.

The protein localises to the cytoplasm. It is found in the cytoskeleton. Its subcellular location is the cell junction. The protein resides in the adherens junction. It localises to the cell membrane. Involved in cell adhesion. May be involved in the attachment of the actin-based microfilaments to the plasma membrane. This chain is Vinculin, found in Brugia malayi (Filarial nematode worm).